Here is a 314-residue protein sequence, read N- to C-terminus: 3'-5' exoribonuclease YhaM (314 aa).

Residues 163-279 (HVVSMLHLAK…LHYIDNLDAK (117 aa)) enclose the HD domain.

Belongs to the YhaM family.

In terms of biological role, shows a 3'-5' exoribonuclease activity. This chain is 3'-5' exoribonuclease YhaM, found in Bacillus pumilus (strain SAFR-032).